A 122-amino-acid chain; its full sequence is uncharacterized protein (122 aa).

This sequence belongs to the IIV-6 115R family.

This is an uncharacterized protein from Acheta domesticus (House cricket).